Reading from the N-terminus, the 176-residue chain is Large ribosomal subunit protein uL16 (176 aa).

It belongs to the universal ribosomal protein uL16 family.

This is Large ribosomal subunit protein uL16 from Picrophilus torridus (strain ATCC 700027 / DSM 9790 / JCM 10055 / NBRC 100828 / KAW 2/3).